Reading from the N-terminus, the 448-residue chain is Tubulin alpha chain, nucleomorph (448 aa).

The GTP site is built by Q11, E71, S140, G144, T145, T179, N206, and N228. E71 contributes to the Mg(2+) binding site. E254 is a catalytic residue.

Belongs to the tubulin family. As to quaternary structure, dimer of alpha and beta chains. A typical microtubule is a hollow water-filled tube with an outer diameter of 25 nm and an inner diameter of 15 nM. Alpha-beta heterodimers associate head-to-tail to form protofilaments running lengthwise along the microtubule wall with the beta-tubulin subunit facing the microtubule plus end conferring a structural polarity. Microtubules usually have 13 protofilaments but different protofilament numbers can be found in some organisms and specialized cells. Requires Mg(2+) as cofactor.

The enzyme catalyses GTP + H2O = GDP + phosphate + H(+). Functionally, tubulin is the major constituent of microtubules, a cylinder consisting of laterally associated linear protofilaments composed of alpha- and beta-tubulin heterodimers. Microtubules grow by the addition of GTP-tubulin dimers to the microtubule end, where a stabilizing cap forms. Below the cap, tubulin dimers are in GDP-bound state, owing to GTPase activity of alpha-tubulin. In Guillardia theta (Cryptophyte), this protein is Tubulin alpha chain, nucleomorph (tubA).